The primary structure comprises 172 residues: MDHLKKYITEINDYPKKGIVFKDLNPIYKEPKAWKELMFPLQNLISTKKPDYIAGIESRGFISASALAFKLEIGLITIRKPNKLPGEVIGTNYKLEYGEDRLEIQQNIIEKDSKILLFDDLLATGGTAGAAGKLIKKAGGNLIGYAFLVELTELKGRENLDSNLLVETLIKY.

The protein belongs to the purine/pyrimidine phosphoribosyltransferase family. Homodimer.

The protein localises to the cytoplasm. The enzyme catalyses AMP + diphosphate = 5-phospho-alpha-D-ribose 1-diphosphate + adenine. Its pathway is purine metabolism; AMP biosynthesis via salvage pathway; AMP from adenine: step 1/1. Its function is as follows. Catalyzes a salvage reaction resulting in the formation of AMP, that is energically less costly than de novo synthesis. The chain is Adenine phosphoribosyltransferase from Prochlorococcus marinus (strain NATL1A).